A 32-amino-acid chain; its full sequence is Yop proteins translocation protein A (32 aa).

The chain is Yop proteins translocation protein A (yscA) from Yersinia enterocolitica serotype O:8 / biotype 1B (strain NCTC 13174 / 8081).